The primary structure comprises 423 residues: Diels-Alderase pyiF (423 aa).

Positions 1–17 are cleaved as a signal peptide; sequence MLPSFIFVYSLLATATA. N-linked (GlcNAc...) asparagine glycosylation is found at asparagine 60, asparagine 92, and asparagine 219.

Belongs to the Diels-Alderase family.

The protein operates within mycotoxin biosynthesis. In terms of biological role, diels-Alderase; part of the gene cluster that mediates the biosynthesis of the mycotoxin pyrichalasin H, a tyrosine-derived cytochalasan that inhibits the growth of rice seedlings, but also inhibits lymphocyte capping and actin polymerization and alters cell morphology. Pyrichalasin H is indicated as the responsible agent for the genus-specific pathogenicity of M.grisea toward crabgrass. The first step in the pathway is catalyzed by the O-methyltransferase pyiA which methylates free tyrosine to generate the precursor O-methyltyrosine. The hybrid PKS-NRPS pyiS, assisted by the enoyl reductase pyiC, are responsible for fusion of the O-methyltyrosine precursor and the polyketide backbone. The polyketide synthase module (PKS) of pyiS is responsible for the synthesis of the polyketide backbone and the downstream nonribosomal peptide synthetase (NRPS) amidates the carboxyl end of the polyketide with the O-methyltyrosine precursor. As the NRPS A-domain demonstrates substrate tolerance, pyiS can also use phenylalanine, tyrosine and even para-chlorophenylalanine as amino acid precursor, which leads to the production of novel cytochalasans, including halogenated cytochalasans. Because pyiS lacks a designated enoylreductase (ER) domain, the required activity is provided the enoyl reductase pyiC. Reduction by the hydrolyase pyiE leads to 1,5-dihydropyrrolone, which is substrate for dehydration and intra-molecular Diels-Alder cyclization by the Diels-Alderase pyiF to yield the required isoindolone-fused macrocycle. The tailoring cytochrome P450 monooxygenases piyD and piyG catalyze the hydroxylation at C-18 and C-7, respectivily, whereas the short-chain dehydrogenase/reductase pyiH reduces the carbonyl at C-21 in preparation for the transfer of an acetyl group by the acetyltransferase pyiB. These 3 reactions whose order is not clear yet, lead to the production of O-methylpyrichalasin J, a deacetylated pyrichalasin H. Finally, pyiB to converts O-methylpyrichalasin J into the final product pyrichalasin H via acetylation of C-21. In Pyricularia grisea (Crabgrass-specific blast fungus), this protein is Diels-Alderase pyiF.